A 334-amino-acid chain; its full sequence is Phospho-N-acetylmuramoyl-pentapeptide-transferase (334 aa).

10 helical membrane passes run 11–31, 55–75, 84–104, 124–144, 158–178, 184–204, 205–225, 233–253, 258–278, and 311–331; these read GAGL…IPLM, PTMG…IFAP, LIIA…DDYI, VGLA…GTAV, PLYY…VNFA, LLGG…ALAL, GQTD…GFLH, IFMG…LAVL, FLLV…ILQV, and LFWG…PGML.

The protein belongs to the glycosyltransferase 4 family. MraY subfamily. The cofactor is Mg(2+).

The protein resides in the cell membrane. It carries out the reaction UDP-N-acetyl-alpha-D-muramoyl-L-alanyl-gamma-D-glutamyl-meso-2,6-diaminopimeloyl-D-alanyl-D-alanine + di-trans,octa-cis-undecaprenyl phosphate = di-trans,octa-cis-undecaprenyl diphospho-N-acetyl-alpha-D-muramoyl-L-alanyl-D-glutamyl-meso-2,6-diaminopimeloyl-D-alanyl-D-alanine + UMP. Its pathway is cell wall biogenesis; peptidoglycan biosynthesis. In terms of biological role, catalyzes the initial step of the lipid cycle reactions in the biosynthesis of the cell wall peptidoglycan: transfers peptidoglycan precursor phospho-MurNAc-pentapeptide from UDP-MurNAc-pentapeptide onto the lipid carrier undecaprenyl phosphate, yielding undecaprenyl-pyrophosphoryl-MurNAc-pentapeptide, known as lipid I. The sequence is that of Phospho-N-acetylmuramoyl-pentapeptide-transferase from Symbiobacterium thermophilum (strain DSM 24528 / JCM 14929 / IAM 14863 / T).